The sequence spans 121 residues: Small ribosomal subunit protein uS13 (121 aa).

The disordered stretch occupies residues 91-121 (HRMSLPVRGQRTRTNARTRRGSRKTVAGRKK). The segment covering 100-121 (QRTRTNARTRRGSRKTVAGRKK) has biased composition (basic residues).

The protein belongs to the universal ribosomal protein uS13 family. In terms of assembly, part of the 30S ribosomal subunit. Forms a loose heterodimer with protein S19. Forms two bridges to the 50S subunit in the 70S ribosome.

Its function is as follows. Located at the top of the head of the 30S subunit, it contacts several helices of the 16S rRNA. In the 70S ribosome it contacts the 23S rRNA (bridge B1a) and protein L5 of the 50S subunit (bridge B1b), connecting the 2 subunits; these bridges are implicated in subunit movement. Contacts the tRNAs in the A and P-sites. In Prochlorococcus marinus (strain MIT 9211), this protein is Small ribosomal subunit protein uS13.